The chain runs to 468 residues: Putative magnesium transporter MRS2-G (468 aa).

Disordered stretches follow at residues Met-1–Val-76 and Gly-183–Arg-204. Composition is skewed to low complexity over residues Ala-14 to Thr-23 and Arg-31 to Ser-45. Over residues Pro-46 to Ala-67 the composition is skewed to pro residues. Basic and acidic residues predominate over residues Gly-187–Gln-201. 2 helical membrane-spanning segments follow: residues Leu-402–Ala-422 and Phe-437–Leu-457.

It belongs to the CorA metal ion transporter (MIT) (TC 1.A.35.5) family. In terms of assembly, interacts with CYCB2-2.

It localises to the membrane. In terms of biological role, putative magnesium transporter. This Oryza sativa subsp. japonica (Rice) protein is Putative magnesium transporter MRS2-G (MRS2-G).